The primary structure comprises 488 residues: ATP synthase subunit beta (488 aa).

164 to 171 (GGAGVGKT) is a binding site for ATP.

Belongs to the ATPase alpha/beta chains family. As to quaternary structure, F-type ATPases have 2 components, CF(1) - the catalytic core - and CF(0) - the membrane proton channel. CF(1) has five subunits: alpha(3), beta(3), gamma(1), delta(1), epsilon(1). CF(0) has four main subunits: a(1), b(1), b'(1) and c(9-12).

The protein resides in the cellular thylakoid membrane. The enzyme catalyses ATP + H2O + 4 H(+)(in) = ADP + phosphate + 5 H(+)(out). In terms of biological role, produces ATP from ADP in the presence of a proton gradient across the membrane. The catalytic sites are hosted primarily by the beta subunits. In Prochlorococcus marinus (strain SARG / CCMP1375 / SS120), this protein is ATP synthase subunit beta.